The chain runs to 255 residues: Imidazole glycerol phosphate synthase subunit HisF (255 aa).

Active-site residues include Asp12 and Asp131.

This sequence belongs to the HisA/HisF family. Heterodimer of HisH and HisF.

Its subcellular location is the cytoplasm. The enzyme catalyses 5-[(5-phospho-1-deoxy-D-ribulos-1-ylimino)methylamino]-1-(5-phospho-beta-D-ribosyl)imidazole-4-carboxamide + L-glutamine = D-erythro-1-(imidazol-4-yl)glycerol 3-phosphate + 5-amino-1-(5-phospho-beta-D-ribosyl)imidazole-4-carboxamide + L-glutamate + H(+). The protein operates within amino-acid biosynthesis; L-histidine biosynthesis; L-histidine from 5-phospho-alpha-D-ribose 1-diphosphate: step 5/9. In terms of biological role, IGPS catalyzes the conversion of PRFAR and glutamine to IGP, AICAR and glutamate. The HisF subunit catalyzes the cyclization activity that produces IGP and AICAR from PRFAR using the ammonia provided by the HisH subunit. The protein is Imidazole glycerol phosphate synthase subunit HisF of Neisseria meningitidis serogroup C / serotype 2a (strain ATCC 700532 / DSM 15464 / FAM18).